The primary structure comprises 89 residues: DNA/RNA-binding protein Alba (89 aa).

K11 carries the post-translational modification N6-acetyllysine.

The protein belongs to the histone-like Alba family. Acetylated. Acetylation at Lys-11 decreases DNA-binding affinity.

It localises to the cytoplasm. The protein resides in the chromosome. Functionally, binds double-stranded DNA tightly but without sequence specificity. Involved in DNA compaction. This is DNA/RNA-binding protein Alba from Thermoplasma volcanium (strain ATCC 51530 / DSM 4299 / JCM 9571 / NBRC 15438 / GSS1).